Consider the following 171-residue polypeptide: uncharacterized protein (171 aa).

This is an uncharacterized protein from Escherichia coli O157:H7.